The primary structure comprises 427 residues: Peptidase B (427 aa).

Lys-195 and Asp-200 together coordinate Mn(2+). Lys-207 is a catalytic residue. Mn(2+) is bound by residues Asp-218, Asp-277, and Glu-279. Arg-281 is an active-site residue.

It belongs to the peptidase M17 family. In terms of assembly, homohexamer. Mn(2+) is required as a cofactor.

Its subcellular location is the cytoplasm. It carries out the reaction Release of an N-terminal amino acid, Xaa, from a peptide or arylamide. Xaa is preferably Glu or Asp but may be other amino acids, including Leu, Met, His, Cys and Gln.. Its function is as follows. Probably plays an important role in intracellular peptide degradation. The chain is Peptidase B from Shigella dysenteriae serotype 1 (strain Sd197).